The following is a 308-amino-acid chain: Cell division protein FtsX (308 aa).

Residues 1-24 lie on the Cytoplasmic side of the membrane; it reads MISRFFRHLFEALKSLKRNGWMTV. Residues 25-45 traverse the membrane as a helical segment; sequence AAVSSVMITLTLVAIFASVIF. The Extracellular portion of the chain corresponds to 46–178; sequence NTAKLATDIE…NTERLFKLAS (133 aa). The helical transmembrane segment at 179–199 threads the bilayer; the sequence is FIRVWGLGIAALLIFIAVFLI. Topologically, residues 200-236 are cytoplasmic; sequence SNTIRITIISRSREIQIMRLVGAKNSYIRGPFLLEGA. The chain crosses the membrane as a helical span at residues 237-257; that stretch reads FIGLLGAIAPSVLVFIVYQIV. Over 258–276 the chain is Extracellular; that stretch reads YQSVNKSLVGQNLSMISPD. Residues 277 to 297 form a helical membrane-spanning segment; that stretch reads LFSPLMIALLFVIGVFIGSLG. At 298-308 the chain is on the cytoplasmic side; that stretch reads SGISMRRFLKI.

This sequence belongs to the ABC-4 integral membrane protein family. FtsX subfamily. Homodimer. Interacts with FtsE; forms a membrane-associated complex. Interacts (via large extracellular loop) with PcsB (via N-terminal coiled-coil domain). This interaction directs PcsB to equatorial and septal sites of dividing cells.

It is found in the cell membrane. In terms of biological role, part of the ABC transporter FtsEX involved in asymmetric cellular division facilitating the initiation of sporulation. Required in maintaining normal growth and cellular morphology. In Streptococcus pneumoniae serotype 2 (strain D39 / NCTC 7466), this protein is Cell division protein FtsX.